The chain runs to 854 residues: MNIQPNTFFLKAMLTLLNIKGNNMCWAHKKNMFERFTEKAVKVIMLAQEEARRLGHNFVGTEQILLGILGEGTGLAAKALKSMGITLKDARIEVEKIIGRGSGFVAIEIPFTPRAKKILELAIEESRILTHNYVGTEHLLLGLIKEGEGVAARVLENLGVDLPKLRSNIIRMIGETSEVSVGATSGRSKVPTLEEFGTNLTQMAVEGKLDPVVGRAKEIERVVQILGRRTKNNPVLIGEPGVGKTAIAEGLAQRIINNEVPDTLEDKKVITLDVSLLVAGTKYRGEFEERLKKIMDEIRMADNVILVIDEVHTLIGAGAAEGAIDAANILKPALARGELQCIGATTLEEYRKHIEKDAALERRFQPVMVEEPTVEETIEILRGLRDRYEAHHRLKISDSAIVAAAKLSDQYIADRFLPDKAIDLVDEASSRVRLMNYKLPPSAEYLDEELRHIQKIKNELIRSGDFEEASQFREREIEVKVQMAALMKAKKEAIEEELALNPPIVNEDDIANIVSSWTGIPVSKLTKSESEKLLHMEETLHSRIVGQNEAVIAVSKAIRRARVGLKNPNRPIASFIFSGPTGVGKTELTKAMASYFFGSEEAMVRLDMSEYMERHTVSKLIGSPPGYVGYNEGGQLTEAVRKRPYTVVLFDEIEKAHPDVFNLLLQILEDGRLTDSKGRTIDFKNTLLIMTSNIGSKVIEKKGGGLGFELEENIEELQYSRMRNLVNEELKQYFRPEFLNRVDEIIVFRQLTKDEVRDIAHIMLREIFERVKQQGISLQVTERFKNLLIEEGYNPSYGARPLRRALVRLLEDSLAEEVLSGKIKEGDNAMIDVDENKQVKILLGNSNNQHAFLA.

In terms of domain architecture, Clp R spans 33–175; sequence FERFTEKAVK…RSNIIRMIGE (143 aa). 2 repeat regions span residues 36–101 and 111–175; these read FTEK…IGRG and FTPR…MIGE. An ATP-binding site is contributed by 238–245; sequence GEPGVGKT. The UVR domain occupies 447-482; sequence DEELRHIQKIKNELIRSGDFEEASQFREREIEVKVQ. 579–586 contacts ATP; sequence GPTGVGKT.

The protein belongs to the ClpA/ClpB family.

It is found in the plastid. It localises to the chloroplast. Functionally, may interact with a ClpP-like protease involved in degradation of denatured proteins in the chloroplast. This chain is ATP-dependent Clp protease ATP-binding subunit ClpA homolog (clpC), found in Cyanidium caldarium (Red alga).